The chain runs to 502 residues: Mannitol 2-dehydrogenase (502 aa).

35–46 contacts NAD(+); it reads IVHVGVGGFHRA.

Belongs to the mannitol dehydrogenase family. In terms of assembly, monomer.

It carries out the reaction D-mannitol + NAD(+) = D-fructose + NADH + H(+). Functionally, catalyzes the NAD(H)-dependent interconversion of D-fructose and D-mannitol in the mannitol metabolic pathway. The protein is Mannitol 2-dehydrogenase of Pyricularia oryzae (strain 70-15 / ATCC MYA-4617 / FGSC 8958) (Rice blast fungus).